The chain runs to 138 residues: Cysteine desulfuration protein SufE (138 aa).

Cys-51 serves as the catalytic Cysteine persulfide intermediate.

The protein belongs to the SufE family. As to quaternary structure, homodimer. Interacts with SufS.

Its subcellular location is the cytoplasm. It participates in cofactor biosynthesis; iron-sulfur cluster biosynthesis. Participates in cysteine desulfuration mediated by SufS. Cysteine desulfuration mobilizes sulfur from L-cysteine to yield L-alanine and constitutes an essential step in sulfur metabolism for biosynthesis of a variety of sulfur-containing biomolecules. Functions as a sulfur acceptor for SufS, by mediating the direct transfer of the sulfur atom from the S-sulfanylcysteine of SufS, an intermediate product of cysteine desulfuration process. The sequence is that of Cysteine desulfuration protein SufE from Shigella flexneri serotype 5b (strain 8401).